Consider the following 173-residue polypeptide: Small ribosomal subunit protein uS5 (173 aa).

Residues 18-81 form the S5 DRBM domain; that stretch reads YVEKLVKLNR…EKAKANMVTF (64 aa).

It belongs to the universal ribosomal protein uS5 family. In terms of assembly, part of the 30S ribosomal subunit. Contacts proteins S4 and S8.

In terms of biological role, with S4 and S12 plays an important role in translational accuracy. Located at the back of the 30S subunit body where it stabilizes the conformation of the head with respect to the body. The chain is Small ribosomal subunit protein uS5 from Treponema denticola (strain ATCC 35405 / DSM 14222 / CIP 103919 / JCM 8153 / KCTC 15104).